The sequence spans 362 residues: Protein RecA (362 aa).

67–74 serves as a coordination point for ATP; the sequence is GPESSGKT. Residues 337–356 show a composition bias toward low complexity; the sequence is VADAPADSAPAPVAAVAPKA. The tract at residues 337 to 362 is disordered; sequence VADAPADSAPAPVAAVAPKASARKSA.

It belongs to the RecA family.

The protein localises to the cytoplasm. In terms of biological role, can catalyze the hydrolysis of ATP in the presence of single-stranded DNA, the ATP-dependent uptake of single-stranded DNA by duplex DNA, and the ATP-dependent hybridization of homologous single-stranded DNAs. It interacts with LexA causing its activation and leading to its autocatalytic cleavage. The protein is Protein RecA of Clavibacter michiganensis subsp. michiganensis (strain NCPPB 382).